Reading from the N-terminus, the 279-residue chain is Ribonuclease T2 protein rnst-2 (279 aa).

The N-terminal stretch at 1 to 17 (MKLLLLLCISCIPLAYS) is a signal peptide. A disulfide bridge connects residues Cys37 and Cys48. His60 is a catalytic residue. An N-linked (GlcNAc...) asparagine glycan is attached at Asn68. Catalysis depends on residues Glu114 and His118. Cys200 and Cys210 are oxidised to a cystine.

This sequence belongs to the RNase T2 family. In terms of tissue distribution, expressed in the pharynx, hypodermis, muscle cells, sheath cells, intestinal cells, the vulva and tail regions.

The protein localises to the lysosome. It catalyses the reaction a ribonucleotidyl-ribonucleotide-RNA + H2O = a 3'-end 3'-phospho-ribonucleotide-RNA + a 5'-end dephospho-ribonucleoside-RNA + H(+). Functionally, probable endoribonuclease involved in the autophagy-mediated degradation of ribosomal RNA and ribosomal proteins in lysosomes. The protein is Ribonuclease T2 protein rnst-2 of Caenorhabditis elegans.